Reading from the N-terminus, the 259-residue chain is DNA repair protein RecO (259 aa).

Belongs to the RecO family.

In terms of biological role, involved in DNA repair and RecF pathway recombination. This Syntrophus aciditrophicus (strain SB) protein is DNA repair protein RecO.